The sequence spans 1405 residues: MAFRKENKVKSFTRIFISLASSDNILAQSSGEVLKPETINYRTYRPERDGLFCERIFGPIKDYECHCGKYKRIRYKGVVCDRCGVEVTEKRVRRERMGHIQLVVPVVHIWYFRSLPNKIGYLLGLSSKKLDAIIYYERFVVIQPGITDKKVCDLLSEEEYLEVLDGLPVENQRLDDINPDKFIAKMGGEAIYDLLSRLELDSLSYELRHKIDNDTSQQRKIDALKRLQVIESFRSSKNKNRPEWMVIGVIPVIPPELRPLIPLDGGRFAASDVNDLYRRVIIRNNRLKRLIDIDAPDVILRNEKRMLQEAVDSLFDNSRKSSAVKTDANRPLKSLSDSLKGKQGRFRQNLLGKRVDYSARSVIVVGPELKMHECGLPKGIAAELYKPFIIRKLMDRGVVKTVKSAKKLVDGRDPIIWDILEYVMKGHPVLLNRAPTLHRLSIQAFQPKLIEGKAIQLHPLSCTAFNADFDGDQMAVHLPLGNEAILEAQMLMLASHNILNPANGTPITIPSQDMVLGLFYITKMRRGAKGEGLKFYGTEEAIIAYNEGKVDIHAFVKVYVDDIDENGTPINHIIETSVGRVIVNGFVPKAVGFVNEELSKKSLRSVISDVIKTCGVSRTAQFLDDIKDLGYMMAFKGCLSFNLDNVIVPKEKETFVQEGYKEIEEILANYNMGIITYNERYNQIIDTWTHVNSRLSDALMKQLREDDQGFNPVFMMLESGARGSKEQIRQLSGMRGLMAKPQKSVMGGGQIIENPILSNFKEGLSVLEYFISTHGARKGLADTALKTADAGYLTRRLVDVSHNVIINEEDCGTLRGLIATELRKNEDVVVSLYERILGRVSVCDVQHPESRKIIVYAGEEISEDKALAIQNSSIERVEIRSVLTCESKKGVCVKCYGRNLATGSIVQIGEAVGVIAAQSIGEPGTQLTLRTFHVGGIASNIATESSVVSKYDGILEIDELRTVEVVDEINNRHLIVVSRLAEMRIIDTRTKIVLATYNIPYASKLFFNDRDEIKKGDLLFEWDAFNASIVSEVAGRFHLENVIENITYKNEYDEQTGLKEKVIIESRDKTKIPVIHILDENGEIRRIYNLPLGAHITKEEKDVIRVGEVLVKIPRTVGKTGDITGGLPRVTELFEARNPSNPAVVSEIDGEISFGKVKRGSREVIVTSKNGDYRTYLVSLSKQILVQENDYIRAGMPLSDGIIAPSDILAVNGPTAVQEYIVNEIQDVYRLQGVKINDKHFEVIVRQMMRKVEIIEAGDTKFVARQLVDRDEVSEENDHIWDKKVVVNVGDSSNVKQGQIITMRKLREENSILKRRDLRLIEVRDSIPATVMQILQGITRASLQTSSFISAASFQETAKVLNEAAIKGKVDKLVGMKENVICGRLIPAGTGLKEYDKIMVETTME.

Residues cysteine 65, cysteine 67, cysteine 80, and cysteine 83 each contribute to the Zn(2+) site. Mg(2+) contacts are provided by aspartate 468, aspartate 470, and aspartate 472. Zn(2+) is bound by residues cysteine 811, cysteine 885, cysteine 892, and cysteine 895.

Belongs to the RNA polymerase beta' chain family. As to quaternary structure, the RNAP catalytic core consists of 2 alpha, 1 beta, 1 beta' and 1 omega subunit. When a sigma factor is associated with the core the holoenzyme is formed, which can initiate transcription. It depends on Mg(2+) as a cofactor. Zn(2+) is required as a cofactor.

The enzyme catalyses RNA(n) + a ribonucleoside 5'-triphosphate = RNA(n+1) + diphosphate. In terms of biological role, DNA-dependent RNA polymerase catalyzes the transcription of DNA into RNA using the four ribonucleoside triphosphates as substrates. The sequence is that of DNA-directed RNA polymerase subunit beta' from Azobacteroides pseudotrichonymphae genomovar. CFP2.